Reading from the N-terminus, the 266-residue chain is Non-structural maintenance of chromosomes element 1 homolog (266 aa).

The interval 1 to 102 is interaction with NSMCE3; the sequence is MQGNTRRTGV…SVSKMASDFA (102 aa). The RING-type; atypical zinc finger occupies 191–232; it reads CNICRSLLIQGQSCETCGIRMHLPCVAKYFQSSSEPHCPHCN. The span at 243 to 252 shows a compositional bias: basic and acidic residues; sequence FDPEKERETG. The segment at 243–266 is disordered; the sequence is FDPEKERETGMSRSNKRPSRSRQH. Over residues 256–266 the composition is skewed to basic residues; that stretch reads SNKRPSRSRQH.

This sequence belongs to the NSE1 family. As to quaternary structure, component of the SMC5-SMC6 complex which consists at least of SMC5, SMC6, NSMCE2, NSMCE1, NSMCE4A or EID3 and NSMCE3. NSMCE1, NSMCE4A or EID3 and NSMCE3 probably form a subcomplex that bridges the head domains of the SMC5-SMC6 heterodimer. Interacts with NSMCE3. Ubiquitinated.

It is found in the nucleus. It localises to the chromosome. The protein localises to the telomere. It catalyses the reaction S-ubiquitinyl-[E2 ubiquitin-conjugating enzyme]-L-cysteine + [acceptor protein]-L-lysine = [E2 ubiquitin-conjugating enzyme]-L-cysteine + N(6)-ubiquitinyl-[acceptor protein]-L-lysine.. Its function is as follows. RING-type zinc finger-containing E3 ubiquitin ligase that assembles with melanoma antigen protein (MAGE) to catalyze the direct transfer of ubiquitin from E2 ubiquitin-conjugating enzyme to a specific substrate. Within MAGE-RING ubiquitin ligase complex, MAGE stimulates and specifies ubiquitin ligase activity likely through recruitment and/or stabilization of the E2 ubiquitin-conjugating enzyme at the E3:substrate complex. Involved in maintenance of genome integrity, DNA damage response and DNA repair. NSMCE3/MAGEG1 and NSMCE1 ubiquitin ligase are components of SMC5-SMC6 complex and may positively regulate homologous recombination-mediated DNA repair. This Bos taurus (Bovine) protein is Non-structural maintenance of chromosomes element 1 homolog (NSMCE1).